A 177-amino-acid polypeptide reads, in one-letter code: Small ribosomal subunit protein uS5 (177 aa).

One can recognise an S5 DRBM domain in the interval 19–82; sequence WQERVVQIRR…ADGKKQLVEV (64 aa).

This sequence belongs to the universal ribosomal protein uS5 family. In terms of assembly, part of the 30S ribosomal subunit. Contacts proteins S4 and S8.

Its function is as follows. With S4 and S12 plays an important role in translational accuracy. Functionally, located at the back of the 30S subunit body where it stabilizes the conformation of the head with respect to the body. This is Small ribosomal subunit protein uS5 from Acaryochloris marina (strain MBIC 11017).